The primary structure comprises 472 residues: Glycogen synthase (472 aa).

Lys16 is a binding site for ADP-alpha-D-glucose.

It belongs to the glycosyltransferase 1 family. Bacterial/plant glycogen synthase subfamily.

It catalyses the reaction [(1-&gt;4)-alpha-D-glucosyl](n) + ADP-alpha-D-glucose = [(1-&gt;4)-alpha-D-glucosyl](n+1) + ADP + H(+). It functions in the pathway glycan biosynthesis; glycogen biosynthesis. Its function is as follows. Synthesizes alpha-1,4-glucan chains using ADP-glucose. The protein is Glycogen synthase of Jannaschia sp. (strain CCS1).